A 301-amino-acid polypeptide reads, in one-letter code: Probable alpha-L-glutamate ligase (301 aa).

The region spanning 104-287 is the ATP-grasp domain; the sequence is TQLLARKGIG…IAGTIYAFLE (184 aa). Residues K141, 178–179, D187, and 211–213 each bind ATP; these read EY and RSN. The Mg(2+) site is built by D248, E260, and N262. Residues D248, E260, and N262 each coordinate Mn(2+).

It belongs to the RimK family. Requires Mg(2+) as cofactor. Mn(2+) serves as cofactor.

The protein is Probable alpha-L-glutamate ligase of Alkalilimnicola ehrlichii (strain ATCC BAA-1101 / DSM 17681 / MLHE-1).